A 198-amino-acid chain; its full sequence is Guanylyl cyclase-activating protein 2 (198 aa).

A lipid anchor (N-myristoyl glycine) is attached at Gly-2. EF-hand domains lie at 16–51, 52–87, 88–123, and 139–174; these read DVAELQEWYKKFVVECPSGTLFMHEFKRFFGVQDNH, EAAEYIENMFRAFDKNGDNTIDFLEYVAALNLVLRG, KLEHKLRWTFKVYDKDGNGCIDKPELLEIVESIYKL, and TPEEVVDRIFQLVDENGDGQLSLDEFIDGARKDKWV. 15 residues coordinate Ca(2+): Asp-65, Asn-67, Asp-69, Thr-71, Glu-76, Asp-101, Asp-103, Asn-105, Cys-107, Glu-112, Asp-152, Asn-154, Asp-156, Gln-158, and Glu-163.

In terms of assembly, undergoes dimerization at low calcium ions concentration, while the presence of calcium ions inhibits its dimerization. Dimerization correlates with its ability to activate GC. As to expression, retina and pineal gland.

Stimulates synthesis of cGMP in photoreceptors. Thought to mediate Ca(2+)-sensitive regulation of retinal guanylyl cyclase (GC), a key event in recovery of the dark state of rod photoreceptors following light exposure. The protein is Guanylyl cyclase-activating protein 2 (GUCA1B) of Gallus gallus (Chicken).